Reading from the N-terminus, the 100-residue chain is uncharacterized protein (100 aa).

Belongs to the csb family.

This is an uncharacterized protein from Dictyostelium discoideum (Social amoeba).